Reading from the N-terminus, the 101-residue chain is Large ribosomal subunit protein uL23 (101 aa).

It belongs to the universal ribosomal protein uL23 family. Part of the 50S ribosomal subunit. Contacts protein L29, and trigger factor when it is bound to the ribosome.

Its function is as follows. One of the early assembly proteins it binds 23S rRNA. One of the proteins that surrounds the polypeptide exit tunnel on the outside of the ribosome. Forms the main docking site for trigger factor binding to the ribosome. The chain is Large ribosomal subunit protein uL23 from Paenarthrobacter aurescens (strain TC1).